The sequence spans 355 residues: Peptide chain release factor 1 (355 aa).

Residue glutamine 233 is modified to N5-methylglutamine. Over residues 282 to 293 (RKKEQARADSRR) the composition is skewed to basic and acidic residues. The disordered stretch occupies residues 282–305 (RKKEQARADSRRGQVGSGDRSERI).

It belongs to the prokaryotic/mitochondrial release factor family. In terms of processing, methylated by PrmC. Methylation increases the termination efficiency of RF1.

The protein localises to the cytoplasm. Its function is as follows. Peptide chain release factor 1 directs the termination of translation in response to the peptide chain termination codons UAG and UAA. This is Peptide chain release factor 1 from Rickettsia rickettsii (strain Iowa).